Reading from the N-terminus, the 94-residue chain is Integration host factor subunit beta (94 aa).

It belongs to the bacterial histone-like protein family. In terms of assembly, heterodimer of an alpha and a beta chain.

This protein is one of the two subunits of integration host factor, a specific DNA-binding protein that functions in genetic recombination as well as in transcriptional and translational control. This chain is Integration host factor subunit beta, found in Ruegeria pomeroyi (strain ATCC 700808 / DSM 15171 / DSS-3) (Silicibacter pomeroyi).